The primary structure comprises 1779 residues: 5-methyl-1-naphthoate synthase (1779 aa).

One can recognise a Ketosynthase family 3 (KS3) domain in the interval Val-10–Gln-433. Catalysis depends on for beta-ketoacyl synthase activity residues Cys-181, His-316, and His-356. The N-terminal hotdog fold stretch occupies residues His-902–Gly-1027. The 279-residue stretch at His-902–Gly-1180 folds into the PKS/mFAS DH domain. A C-terminal hotdog fold region spans residues Pro-1042–Gly-1180. Residues Gly-1664–Val-1742 enclose the Carrier domain. An O-(pantetheine 4'-phosphoryl)serine modification is found at Ser-1702. A disordered region spans residues Thr-1746–Leu-1771.

It catalyses the reaction 5 malonyl-CoA + acetyl-CoA + 3 NADPH + 7 H(+) = 5-methyl-1-naphthoate + 5 CO2 + 3 NADP(+) + 6 CoA + 4 H2O. It functions in the pathway antibiotic biosynthesis. Polyketide synthase that catalyzes the biosynthesis of the bicyclic aromatic compound 5-methyl-1-naphthoate in the biosynthesis of the antitumor antibiotic azinomycin B. This chain is 5-methyl-1-naphthoate synthase, found in Streptomyces sahachiroi.